The primary structure comprises 325 residues: Beta-ketoacyl-[acyl-carrier-protein] synthase III (325 aa).

Residues Cys-116 and His-252 contribute to the active site. The interval Gln-253 to Arg-257 is ACP-binding. The active site involves Asn-282.

This sequence belongs to the thiolase-like superfamily. FabH family. As to quaternary structure, homodimer.

The protein resides in the cytoplasm. The catalysed reaction is butanoyl-CoA + malonyl-[ACP] + H(+) = 3-oxohexanoyl-[ACP] + CO2 + CoA. It catalyses the reaction hexanoyl-CoA + malonyl-[ACP] + H(+) = 3-oxooctanoyl-[ACP] + CO2 + CoA. The enzyme catalyses octanoyl-CoA + malonyl-[ACP] + H(+) = 3-oxodecanoyl-[ACP] + CO2 + CoA. It carries out the reaction decanoyl-CoA + malonyl-[ACP] + H(+) = 3-oxododecanoyl-[ACP] + CO2 + CoA. The catalysed reaction is 2-methylpropanoyl-CoA + malonyl-[ACP] + H(+) = 4-methyl-3-oxopentanoyl-[ACP] + CO2 + CoA. It catalyses the reaction 3-methylbutanoyl-CoA + malonyl-[ACP] + H(+) = 5-methyl-3-oxohexanoyl-[ACP] + CO2 + CoA. The enzyme catalyses malonyl-[ACP] + acetyl-CoA + H(+) = 3-oxobutanoyl-[ACP] + CO2 + CoA. It participates in lipid metabolism; fatty acid biosynthesis. Its function is as follows. Catalyzes the condensation reaction of fatty acid synthesis by the addition to an acyl acceptor of two carbons from malonyl-ACP. Catalyzes the first condensation reaction which initiates fatty acid synthesis and may therefore play a role in governing the total rate of fatty acid production. Possesses both acetoacetyl-ACP synthase and acetyl transacylase activities. Can use a wide range of acyl-CoAs as the primer substrate in vitro, with a slight preference for short, medium-straight chain acyl-CoAs. Can also use branched-chain acyl-CoAs and acetyl-CoA. This Xanthomonas campestris pv. campestris (strain 8004) protein is Beta-ketoacyl-[acyl-carrier-protein] synthase III.